We begin with the raw amino-acid sequence, 768 residues long: DNA topoisomerase 4 subunit A (768 aa).

The 484-residue stretch at L38 to A521 folds into the Topo IIA-type catalytic domain. Y126 serves as the catalytic O-(5'-phospho-DNA)-tyrosine intermediate.

This sequence belongs to the type II topoisomerase GyrA/ParC subunit family. ParC type 1 subfamily. As to quaternary structure, heterotetramer composed of ParC and ParE.

The protein localises to the cell membrane. It catalyses the reaction ATP-dependent breakage, passage and rejoining of double-stranded DNA.. In terms of biological role, topoisomerase IV is essential for chromosome segregation. It relaxes supercoiled DNA. Performs the decatenation events required during the replication of a circular DNA molecule. The sequence is that of DNA topoisomerase 4 subunit A from Neisseria gonorrhoeae.